Consider the following 471-residue polypeptide: Plant intracellular Ras-group-related LRR protein 2 (471 aa).

Positions 106–133 form a coiled coil; that stretch reads VVRLDEVHDSYEKKLKDTEEELSRVYST. LRR repeat units lie at residues 159 to 182, 183 to 205, 206 to 229, 231 to 251, 253 to 275, 276 to 298, 300 to 321, 324 to 346, 347 to 369, and 371 to 392; these read GGTV…FWKV, VGLV…ISKL, KKLE…GMLL, LRIL…IAHC, SLVE…GYGL, QNLE…ISEM, NLKY…IGRL, LEVL…ITDL, TNLR…FYRL, and KLEK…VATQ. The GVYW; degenerate signature appears at 393–405; it reads GAEVVREFMRKRW.

Belongs to the SHOC2 family. Widely expressed but preferentially in roots.

Its function is as follows. Leucine-rich repeat protein that likely mediates protein interactions, possibly in the context of signal transduction. This Arabidopsis thaliana (Mouse-ear cress) protein is Plant intracellular Ras-group-related LRR protein 2 (PIRL2).